We begin with the raw amino-acid sequence, 269 residues long: Probable 3-deoxy-manno-octulosonic acid transferase (269 aa).

The protein resides in the cytoplasm. The catalysed reaction is an alpha-Kdo-(2-&gt;4)-alpha-Kdo-(2-&gt;6)-lipid IVA + CMP-3-deoxy-beta-D-manno-octulosonate = an alpha-Kdo-(2-&gt;4)-alpha-Kdo-(2-&gt;4)-alpha-Kdo-(2-&gt;6)-lipid IVA + CMP + H(+). Its pathway is bacterial outer membrane biogenesis; LPS core biosynthesis. Its function is as follows. Involved in the biosynthesis of the core oligosaccharide region of lipopolysaccharide (LPS). Required for the addition of 3-deoxy-D-manno-oct-2-ulosonic acid III (KdoIII) to the KdoII residue of the inner lipopolysaccharide core. This chain is Probable 3-deoxy-manno-octulosonic acid transferase, found in Salmonella typhimurium (strain LT2 / SGSC1412 / ATCC 700720).